Here is a 366-residue protein sequence, read N- to C-terminus: Proline-rich protein 19 (366 aa).

Disordered stretches follow at residues 1 to 53 (MDPR…RDPC), 102 to 149 (ESHT…DLPV), 256 to 286 (TPAHRGSQVQPPGHQLPFLSSASSPSGAAWG), and 301 to 338 (ATPPPPPPQPWDVRPPQPLPQPPSPLLPRTSALDWSPN). Residues 18 to 29 (GRIRRRKTRRER) are compositionally biased toward basic residues. 2 stretches are compositionally biased toward polar residues: residues 104–113 (HTPQLPTKPS) and 256–265 (TPAHRGSQVQ). The span at 275–286 (SSASSPSGAAWG) shows a compositional bias: low complexity. Residues 302 to 326 (TPPPPPPQPWDVRPPQPLPQPPSPL) are compositionally biased toward pro residues.

As to quaternary structure, interacts with CNTD1. Preferentially expressed in gonads.

The protein localises to the nucleus. The protein resides in the chromosome. Functionally, promotes meiotic crossing over formation through its interaction with CNTD1 by participating in the crossover differentiation step of crossover-specific recombination intermediates. The protein is Proline-rich protein 19 of Mus musculus (Mouse).